A 244-amino-acid polypeptide reads, in one-letter code: Probable transcriptional regulatory protein DMR_30850 (244 aa).

Belongs to the TACO1 family.

The protein localises to the cytoplasm. The protein is Probable transcriptional regulatory protein DMR_30850 of Solidesulfovibrio magneticus (strain ATCC 700980 / DSM 13731 / RS-1) (Desulfovibrio magneticus).